Here is a 397-residue protein sequence, read N- to C-terminus: Probable peptidoglycan glycosyltransferase FtsW (397 aa).

Residues 1 to 30 (MYGLEMLEKIKLEYDKWACLTPKNSLYDRT) lie on the Cytoplasmic side of the membrane. Residues 31-51 (LVWLFLSLLMIGFIMVTSASI) traverse the membrane as a helical segment. Residues 52-61 (PVSTRLNNDP) lie on the Periplasmic side of the membrane. A helical transmembrane segment spans residues 62–82 (FHFAIRDSIYLACSLLAFAFV). The Cytoplasmic segment spans residues 83–94 (VKIPMRNWEKYN). Residues 95 to 115 (VPLFLLSLLFLASVLIFGRSV) traverse the membrane as a helical segment. Residues 116–126 (NGSIRWIQLGP) are Periplasmic-facing. Residues 127–146 (INFQPAELSKLAIICYFSSF) traverse the membrane as a helical segment. At 147 to 158 (YVRKYDEMRNRS) the chain is on the cytoplasmic side. 2 consecutive transmembrane segments (helical) span residues 159 to 179 (ASVI…LLQP) and 180 to 200 (DLGS…IMGA). Position 201 (lysine 201) is a topological domain, cytoplasmic. The helical transmembrane segment at 202–222 (VMQFLLLIVTASVSFILLVLT) threads the bilayer. Residues 223–280 (SEYRLKRVTSFLDPFADAYGDGFQLSNAQMAFGQGQLWGQGLGNSVQKLEYLPEAHTD) lie on the Periplasmic side of the membrane. The chain crosses the membrane as a helical span at residues 281–301 (FVMAVVAEEFGFIGIIFMVVL). At 302-325 (LLCLSFRAIKISRDALKLEARFRG) the chain is on the cytoplasmic side. Residues 326 to 346 (FFAFGVAIWVFLQGSVNLGVA) traverse the membrane as a helical segment. At 347–356 (SGALPTKGLT) the chain is on the periplasmic side. Residues 357 to 377 (FPLVSYGGSSLVIMSVAIAIL) traverse the membrane as a helical segment. At 378–397 (LRIDYENRLTRVGHAQIKEP) the chain is on the cytoplasmic side.

Belongs to the SEDS family. FtsW subfamily.

The protein resides in the cell inner membrane. It catalyses the reaction [GlcNAc-(1-&gt;4)-Mur2Ac(oyl-L-Ala-gamma-D-Glu-L-Lys-D-Ala-D-Ala)](n)-di-trans,octa-cis-undecaprenyl diphosphate + beta-D-GlcNAc-(1-&gt;4)-Mur2Ac(oyl-L-Ala-gamma-D-Glu-L-Lys-D-Ala-D-Ala)-di-trans,octa-cis-undecaprenyl diphosphate = [GlcNAc-(1-&gt;4)-Mur2Ac(oyl-L-Ala-gamma-D-Glu-L-Lys-D-Ala-D-Ala)](n+1)-di-trans,octa-cis-undecaprenyl diphosphate + di-trans,octa-cis-undecaprenyl diphosphate + H(+). It participates in cell wall biogenesis; peptidoglycan biosynthesis. Its function is as follows. Peptidoglycan polymerase that is essential for cell division. The sequence is that of Probable peptidoglycan glycosyltransferase FtsW from Haemophilus ducreyi (strain 35000HP / ATCC 700724).